The chain runs to 147 residues: Hemoglobin anodic subunit beta (147 aa).

The Globin domain occupies Glu-2 to His-147. His-63 and His-92 together coordinate heme b.

This sequence belongs to the globin family. Heterotetramer of two alpha chains and two beta chains. Red blood cells.

Involved in oxygen transport from gills to the various peripheral tissues. The protein is Hemoglobin anodic subunit beta (hbb1) of Anguilla anguilla (European freshwater eel).